The following is a 288-amino-acid chain: Pantothenate synthetase (288 aa).

31-38 (MGNLHRGH) is an ATP binding site. His-38 serves as the catalytic Proton donor. Gln-62 lines the (R)-pantoate pocket. Gln-62 is a beta-alanine binding site. ATP is bound at residue 150-153 (GQKD). A (R)-pantoate-binding site is contributed by Gln-156. Residues Ile-179 and 187–190 (LSSR) contribute to the ATP site.

This sequence belongs to the pantothenate synthetase family. As to quaternary structure, homodimer.

The protein localises to the cytoplasm. It carries out the reaction (R)-pantoate + beta-alanine + ATP = (R)-pantothenate + AMP + diphosphate + H(+). It participates in cofactor biosynthesis; (R)-pantothenate biosynthesis; (R)-pantothenate from (R)-pantoate and beta-alanine: step 1/1. In terms of biological role, catalyzes the condensation of pantoate with beta-alanine in an ATP-dependent reaction via a pantoyl-adenylate intermediate. This chain is Pantothenate synthetase, found in Wigglesworthia glossinidia brevipalpis.